Consider the following 477-residue polypeptide: GTPase Der (477 aa).

2 EngA-type G domains span residues 3–167 and 206–382; these read LTIA…GKER and LRIA…RMWN. GTP-binding positions include 9 to 16, 56 to 60, 119 to 122, 212 to 219, 259 to 263, and 324 to 327; these read GRPNVGKS, DTAGL, NKSE, GRPNTGKS, and NKWD. Residues 383–467 form the KH-like domain; the sequence is RRISTAKLNR…PIRISLRASD (85 aa).

This sequence belongs to the TRAFAC class TrmE-Era-EngA-EngB-Septin-like GTPase superfamily. EngA (Der) GTPase family. As to quaternary structure, associates with the 50S ribosomal subunit.

Functionally, GTPase that plays an essential role in the late steps of ribosome biogenesis. The polypeptide is GTPase Der (Bartonella quintana (strain Toulouse) (Rochalimaea quintana)).